A 319-amino-acid chain; its full sequence is Multivesicular body subunit 12B (319 aa).

The interval 1–50 (MRSCFCVRRSRDPPPPQPPPPPPQRGTDQSTMPEVKDLSEALPETSMDPI) is disordered. A compositionally biased stretch (pro residues) spans 13-24 (PPPPQPPPPPPQ). Ser-46 and Ser-101 each carry phosphoserine. Positions 47–193 (MDPITGVGVV…SMGIWYRMGR (147 aa)) constitute an MABP domain. Phosphothreonine is present on residues Thr-122, Thr-204, and Thr-205. A disordered region spans residues 195 to 222 (PRNHDSSQPTTPSQSSAASTPAPNLPRH). Low complexity predominate over residues 200 to 216 (SSQPTTPSQSSAASTPA). Phosphoserine is present on Ser-224. One can recognise a UMA domain in the interval 254–303 (MDGVPFMISEKFSCVPESMQPFDLLGITIKSLAEIEKEYEYSFRTEQSAA). The segment at 299-319 (EQSAAARLPPSPTRCQQIPQS) is disordered. Ser-309 is modified (phosphoserine).

Belongs to the MVB12 family. In terms of assembly, component of the ESCRT-I complex (endosomal sorting complex required for transport I) which consists of TSG101, VPS28, a VPS37 protein (VPS37A to -D) and MVB12A or MVB12B in a 1:1:1:1 stoichiometry. Interacts with TSG101; the association appears to be mediated by the TSG101-VPS37 binary subcomplex. Interacts with VPS28. Interacts with VPS37B; the association appears to be mediated by the TSG101-VPS37 binary subcomplex. Interacts with VPS37C; the association appears to be mediated by the TSG101-VPS37 binary subcomplex.

The protein localises to the endosome. It localises to the late endosome membrane. Component of the ESCRT-I complex, a regulator of vesicular trafficking process. Required for the sorting of endocytic ubiquitinated cargos into multivesicular bodies. This Homo sapiens (Human) protein is Multivesicular body subunit 12B (MVB12B).